The primary structure comprises 667 residues: DNA ligase (667 aa).

NAD(+) is bound by residues 32 to 36 and 80 to 81; these read DKDYD and SL. The active-site N6-AMP-lysine intermediate is the K121. NAD(+) is bound by residues R143, E178, and K314. 4 residues coordinate Zn(2+): C407, C410, C423, and C429. The region spanning 587–667 is the BRCT domain; the sequence is IVESIFKDKT…EFEKMLGRES (81 aa).

Belongs to the NAD-dependent DNA ligase family. LigA subfamily. Mg(2+) serves as cofactor. It depends on Mn(2+) as a cofactor.

It carries out the reaction NAD(+) + (deoxyribonucleotide)n-3'-hydroxyl + 5'-phospho-(deoxyribonucleotide)m = (deoxyribonucleotide)n+m + AMP + beta-nicotinamide D-nucleotide.. In terms of biological role, DNA ligase that catalyzes the formation of phosphodiester linkages between 5'-phosphoryl and 3'-hydroxyl groups in double-stranded DNA using NAD as a coenzyme and as the energy source for the reaction. It is essential for DNA replication and repair of damaged DNA. The polypeptide is DNA ligase (Clostridium botulinum (strain Eklund 17B / Type B)).